Here is a 370-residue protein sequence, read N- to C-terminus: MAVTVEEAPWLGWIVAKALMRFAFMVANNLVAIPSYICYVIILQPLRVLDSKRFWYIEGLMYKWLLGMVASWGWYAGYTVMEWGEDIKAIAKDEAVMLVNHQATGDVCTLMMCLQDKGPVVAQMMWLMDHIFKYTNFGIVSLIHGDFFIRQGRAYRDQQLLVLKKHLEHNYRSRDRKWIVLFPEGGFLRKRRETSQAFAKKNNLPFLTHVTLPRFGATNIILKALVARQENGSPAGGDARGLECKSRGLQWIIDTTIAYPKAEPIDIQTWILGYRKPTVTHVHYRIFPIGDVPLETEDLTSWLYQRFIEKEDLLSHFYKTGAFPPPQGQKEAVCREMTLSNMWIFLIQSFAFLSGYLWYHIIQYFYHCLF.

A helical transmembrane segment spans residues 22–42 (FAFMVANNLVAIPSYICYVII). The HXXXXD motif signature appears at 101 to 106 (HQATGD). Residues 342–362 (MWIFLIQSFAFLSGYLWYHII) form a helical membrane-spanning segment.

The protein belongs to the 1-acyl-sn-glycerol-3-phosphate acyltransferase family. In terms of tissue distribution, ubiquitous. Expressed in heart, kidney, liver, skin, intestine, and thymus. Highest expression is detected in brain and testis.

Its subcellular location is the endoplasmic reticulum membrane. It catalyses the reaction a 2-acyl-sn-glycero-3-phosphoethanolamine + octadecanoyl-CoA = 1-octadecanoyl-2-acyl-sn-glycero-3-phosphoethanolamine + CoA. It carries out the reaction 2-(9Z-octadecenoyl)-sn-glycero-3-phosphoethanolamine + octadecanoyl-CoA = 1-octadecanoyl-2-(9Z-octadecenoyl)-sn-glycero-3-phosphoethanolamine + CoA. The enzyme catalyses a 2-acyl-sn-glycero-3-phosphoethanolamine + hexadecanoyl-CoA = 1-hexadecanoyl-2-acyl-sn-glycero-3-phosphoethanolamine + CoA. The catalysed reaction is 2-(9Z-octadecenoyl)-sn-glycero-3-phosphoethanolamine + hexadecanoyl-CoA = 1-hexadecanoyl-2-(9Z-octadecenoyl)-sn-glycero-3-phosphoethanolamine + CoA. It catalyses the reaction 1-tetradecanoyl-sn-glycero-3-phospho-(1'-sn-glycerol) + hexadecanoyl-CoA = 1-tetradecanoyl-2-hexadecanoyl-sn-glycero-3-phospho-(1'-sn-glycerol) + CoA. It carries out the reaction 1-hexadecanoyl-sn-glycero-3-phospho-(1'-sn-glycerol) + dodecanoyl-CoA = 1-hexadecanoyl-2-dodecanoyl-sn-glycero-3-phospho-(1'-sn-glycerol) + CoA. The enzyme catalyses 1-hexadecanoyl-sn-glycero-3-phospho-(1'-sn-glycerol) + hexadecanoyl-CoA = 1,2-dihexadecanoyl-sn-glycero-3-phospho-(1'-sn-glycerol) + CoA. The catalysed reaction is 1-hexadecanoyl-sn-glycero-3-phospho-(1'-sn-glycerol) + octadecanoyl-CoA = 1-hexadecanoyl-2-octadecanoyl-sn-glycero-3-phospho-(1'-sn-glycerol) + CoA. It catalyses the reaction 1-octadecanoyl-sn-glycero-3-phospho-(1'-sn-glycerol) + hexadecanoyl-CoA = 1-octadecanoyl-2-hexadecanoyl-sn-glycero-3-phospho-(1'-sn-glycerol) + CoA. It carries out the reaction 1-(9Z-octadecenoyl)-sn-glycero-3-phospho-(1'-sn-glycerol) + dodecanoyl-CoA = 1-(9Z-octadecenoyl)-2-dodecanoyl-sn-glycero-3-phospho-(1'-sn-glycerol) + CoA. The enzyme catalyses 1-hexadecanoyl-sn-glycero-3-phospho-(1'-sn-glycerol) + (9Z)-octadecenoyl-CoA = 1-hexadecanoyl-2-(9Z-octadecenoyl)-sn-glycero-3-phospho-(1'-sn-glycerol) + CoA. The catalysed reaction is 1-(9Z-octadecenoyl)-sn-glycero-3-phospho-(1'-sn-glycerol) + hexadecanoyl-CoA = 1-(9Z-octadecenoyl)-2-hexadecanoyl-sn-glycero-3-phospho-(1'-sn-glycerol) + CoA. It catalyses the reaction 1-(9Z-octadecenoyl)-sn-glycero-3-phospho-(1'-sn-glycerol) + (9Z)-octadecenoyl-CoA = 1,2-di-(9Z-octadecenoyl)-sn-glycero-3-phospho-(1'-sn-glycerol) + CoA. It carries out the reaction a 2-acylglycerol + an acyl-CoA = a 1,2-diacylglycerol + CoA. The enzyme catalyses a 2-acylglycerol + hexadecanoyl-CoA = a 1-hexadecanoyl-2-acylglycerol + CoA. The catalysed reaction is a 1-acylglycerol + hexadecanoyl-CoA = an hexadecanoyl-acylglycerol + CoA. It catalyses the reaction a 2-acyl-sn-glycero-3-phosphocholine + an acyl-CoA = a 1,2-diacyl-sn-glycero-3-phosphocholine + CoA. It carries out the reaction 2-(9Z-octadecenoyl)-sn-glycero-3-phosphocholine + octadecanoyl-CoA = 1-octadecanoyl-2-(9Z-octadecenoyl)-sn-glycero-3-phosphocholine + CoA. The enzyme catalyses 2-(9Z,12Z-octadecadienoyl)-sn-glycero-3-phosphocholine + octadecanoyl-CoA = 1-octadecanoyl-2-(9Z,12Z)-octadecadienoyl-sn-glycero-3-phosphocholine + CoA. The catalysed reaction is 2-(5Z,8Z,11Z,14Z)-eicosatetraenoyl-sn-glycero-3-phosphocholine + octadecanoyl-CoA = 1-octadecanoyl-2-(5Z,8Z,11Z,14Z-eicosatetraenoyl)-sn-glycero-3-phosphocholine + CoA. It catalyses the reaction 2-(9Z-octadecenoyl)-sn-glycero-3-phosphocholine + hexadecanoyl-CoA = 1-hexadecanoyl-2-(9Z-octadecenoyl)-sn-glycero-3-phosphocholine + CoA. It carries out the reaction 2-(9Z-octadecenoyl)-sn-glycero-3-phospho-L-serine + hexadecanoyl-CoA = 1-hexadecanoyl-2-(9Z-octadecenoyl)-sn-glycero-3-phospho-L-serine + CoA. The enzyme catalyses 2-(4Z,7Z,10Z,13Z,16Z,19Z-docosahexaenoyl)-sn-glycero-3-phosphocholine + octadecanoyl-CoA = 1-octadecanoyl-2-(4Z,7Z,10Z,13Z,16Z,19Z-docosahexaenoyl)-sn-glycero-3-phosphocholine + CoA. The catalysed reaction is 1-(9Z-octadecenoyl)-sn-glycero-3-phospho-L-serine + octadecanoyl-CoA = 1-(9Z-octadecenoyl)-2-octadecanoyl-sn-glycero-3-phospho-L-serine + CoA. It catalyses the reaction a 2-acyl-sn-glycero-3-phosphoethanolamine + a fatty acyl-CoA = a 1,2-diacyl-sn-glycero-3-phosphoethanolamine + CoA. In terms of biological role, lysophospholipid acyltransferase involved in fatty acyl chain remodeling of glycerophospholipids in the endoplasmic reticulum membrane. Selectively catalyzes the transfer and esterification of saturated long-chain fatty acids from acyl-CoA to the sn-1 position of 1-lyso-2-acyl phosphatidylethanolamines (1-lyso-PE, LPE), with a preference for stearoyl CoA over palmitoyl CoA as acyl donor. Acts in concert with an unknown phospholipase A1 to convert palmitate PE species into stearate ones. Provides substrates to the PE methylation pathway, controlling stearate/palmitate composition of PE and phosphatidylcholine (PC) species with an overall impact on de novo hepatic lipid synthesis, body fat content and life span. Can acylate lysophosphatidylglycerols (LPG) using various saturated fatty acyl-CoAs as acyl donors. Can also acylate monoacylglycerols with a preference for 2-monoacylglycerols over 1-monoacylglycerols. Has no activity toward lysophosphatidic acids (LPA) and lysophosphatidylcholines (LPC). In Mus musculus (Mouse), this protein is Acyl-CoA:lysophosphatidylglycerol acyltransferase 1.